The primary structure comprises 271 residues: DNA-binding protein HEXBP (271 aa).

Basic and acidic residues-rich tracts occupy residues 1–12 (MSETEDVKRPRT) and 21–42 (CGKE…DERS). The segment at 1-42 (MSETEDVKRPRTESSTSCRNCGKEGHYARECPEADSKGDERS) is disordered. 4 consecutive CCHC-type zinc fingers follow at residues 16 to 33 (TSCR…ECPE), 43 to 60 (TTCF…ECPN), 70 to 87 (MTCF…DCPN), and 97 to 114 (FECY…DCPS). The disordered stretch occupies residues 107–136 (HLSRDCPSSQGGSRGGYGQKRGRSGAQGGY). A compositionally biased stretch (gly residues) spans 118 to 136 (GSRGGYGQKRGRSGAQGGY). 5 CCHC-type zinc fingers span residues 140–157 (RTCY…DCPN), 168–185 (RTCY…DCPN), 196–213 (RKCY…ECPS), 222–239 (RACY…ECPE), and 253–270 (RTCY…DCPS).

Its subcellular location is the nucleus. In terms of biological role, binds to single-stranded DNA located in the 5' hexanucleotide repeat region of the L.major leishmanolysin (GP63) gene. The protein is DNA-binding protein HEXBP (HEXBP) of Leishmania major.